Here is a 163-residue protein sequence, read N- to C-terminus: Arginine repressor (163 aa).

It belongs to the ArgR family.

It localises to the cytoplasm. It functions in the pathway amino-acid biosynthesis; L-arginine biosynthesis [regulation]. Its function is as follows. Regulates arginine biosynthesis genes. This chain is Arginine repressor, found in Anaeromyxobacter dehalogenans (strain 2CP-C).